Reading from the N-terminus, the 179-residue chain is Proteasome chaperone 3 (179 aa).

The protein belongs to the PSMG3 family. As to quaternary structure, component of the 20S proteasome chaperone. Forms a heterodimer with POC4 that binds to proteasome precursors. Interacts with POP2.

Functionally, involved in 20S proteasome assembly, facilitating the alpha-ring formation. The chain is Proteasome chaperone 3 (IRC25) from Saccharomyces cerevisiae (strain ATCC 204508 / S288c) (Baker's yeast).